Reading from the N-terminus, the 561-residue chain is DNA ligase B (561 aa).

Lys125 acts as the N6-AMP-lysine intermediate in catalysis.

This sequence belongs to the NAD-dependent DNA ligase family. LigB subfamily.

It catalyses the reaction NAD(+) + (deoxyribonucleotide)n-3'-hydroxyl + 5'-phospho-(deoxyribonucleotide)m = (deoxyribonucleotide)n+m + AMP + beta-nicotinamide D-nucleotide.. Its function is as follows. Catalyzes the formation of phosphodiester linkages between 5'-phosphoryl and 3'-hydroxyl groups in double-stranded DNA using NAD as a coenzyme and as the energy source for the reaction. The protein is DNA ligase B of Salmonella choleraesuis (strain SC-B67).